Reading from the N-terminus, the 398-residue chain is Acetate kinase (398 aa).

Residue Asn8 participates in Mg(2+) binding. Lys15 is an ATP binding site. Arg89 serves as a coordination point for substrate. Asp146 (proton donor/acceptor) is an active-site residue. Residues 206 to 210, 283 to 285, and 331 to 335 contribute to the ATP site; these read HIGNG, DMR, and GMGEN. Residue Glu383 participates in Mg(2+) binding.

The protein belongs to the acetokinase family. As to quaternary structure, homodimer. Requires Mg(2+) as cofactor. Mn(2+) serves as cofactor.

It is found in the cytoplasm. The catalysed reaction is acetate + ATP = acetyl phosphate + ADP. The protein operates within metabolic intermediate biosynthesis; acetyl-CoA biosynthesis; acetyl-CoA from acetate: step 1/2. Functionally, catalyzes the formation of acetyl phosphate from acetate and ATP. Can also catalyze the reverse reaction. In Streptococcus pyogenes serotype M12 (strain MGAS2096), this protein is Acetate kinase.